The chain runs to 128 residues: Large ribosomal subunit protein bL12 (128 aa).

The protein belongs to the bacterial ribosomal protein bL12 family. Homodimer. Part of the ribosomal stalk of the 50S ribosomal subunit. Forms a multimeric L10(L12)X complex, where L10 forms an elongated spine to which 2 to 4 L12 dimers bind in a sequential fashion. Binds GTP-bound translation factors.

Functionally, forms part of the ribosomal stalk which helps the ribosome interact with GTP-bound translation factors. Is thus essential for accurate translation. This is Large ribosomal subunit protein bL12 from Picosynechococcus sp. (strain ATCC 27264 / PCC 7002 / PR-6) (Agmenellum quadruplicatum).